A 95-amino-acid polypeptide reads, in one-letter code: DNA-directed RNA polymerase subunit Rpo11 (95 aa).

This sequence belongs to the archaeal Rpo11/eukaryotic RPB11/RPC19 RNA polymerase subunit family. Part of the RNA polymerase complex.

It localises to the cytoplasm. It catalyses the reaction RNA(n) + a ribonucleoside 5'-triphosphate = RNA(n+1) + diphosphate. DNA-dependent RNA polymerase (RNAP) catalyzes the transcription of DNA into RNA using the four ribonucleoside triphosphates as substrates. The chain is DNA-directed RNA polymerase subunit Rpo11 from Methanococcus vannielii (strain ATCC 35089 / DSM 1224 / JCM 13029 / OCM 148 / SB).